The chain runs to 107 residues: Putative antitoxin VapB5 (107 aa).

2 helical membrane passes run 3 to 23 and 65 to 85; these read GPVI…ILLA and LIIL…AYLY.

Its subcellular location is the cell membrane. Its function is as follows. Possibly the antitoxin component of a type II toxin-antitoxin (TA) system. Its cognate toxin is VapC5 (Potential). This is Putative antitoxin VapB5 (vapB5) from Methanocaldococcus jannaschii (strain ATCC 43067 / DSM 2661 / JAL-1 / JCM 10045 / NBRC 100440) (Methanococcus jannaschii).